A 198-amino-acid polypeptide reads, in one-letter code: Putative pseudouridine methyltransferase (198 aa).

S-adenosyl-L-methionine is bound by residues Met-132 and Cys-186.

It belongs to the methyltransferase superfamily. TrmY family.

It localises to the cytoplasm. This Photobacterium profundum (strain SS9) protein is Putative pseudouridine methyltransferase.